The chain runs to 483 residues: Aspartyl/glutamyl-tRNA(Asn/Gln) amidotransferase subunit B (483 aa).

Belongs to the GatB/GatE family. GatB subfamily. Heterotrimer of A, B and C subunits.

It catalyses the reaction L-glutamyl-tRNA(Gln) + L-glutamine + ATP + H2O = L-glutaminyl-tRNA(Gln) + L-glutamate + ADP + phosphate + H(+). The catalysed reaction is L-aspartyl-tRNA(Asn) + L-glutamine + ATP + H2O = L-asparaginyl-tRNA(Asn) + L-glutamate + ADP + phosphate + 2 H(+). Its function is as follows. Allows the formation of correctly charged Asn-tRNA(Asn) or Gln-tRNA(Gln) through the transamidation of misacylated Asp-tRNA(Asn) or Glu-tRNA(Gln) in organisms which lack either or both of asparaginyl-tRNA or glutaminyl-tRNA synthetases. The reaction takes place in the presence of glutamine and ATP through an activated phospho-Asp-tRNA(Asn) or phospho-Glu-tRNA(Gln). In Thermomicrobium roseum (strain ATCC 27502 / DSM 5159 / P-2), this protein is Aspartyl/glutamyl-tRNA(Asn/Gln) amidotransferase subunit B.